A 372-amino-acid polypeptide reads, in one-letter code: MEPVPSARAELQFSLLANVSDTFPSAFPSASANASGSPGARSASSLALAIAITALYSAVCAVGLLGNVLVMFGIVRYTKLKTATNIYIFNLALADALATSTLPFQSAKYLMETWPFGELLCKAVLSIDYYNMFTSIFTLTMMSVDRYIAVCHPVKALDFRTPAKAKLINICIWVLASGVGVPIMVMAVTQPRDGAVVCTLQFPSPSWYWDTVTKICVFLFAFVVPILIITVCYGLMLLRLRSVRLLSGSKEKDRSLRRITRMVLVVVGAFVVCWAPIHIFVIVWTLVDINRRDPLVVAALHLCIALGYANSSLNPVLYAFLDENFKRCFRQLCRAPCGGQEPGSLRRPRQATARERVTACTPSDGPGGGAAA.

The Extracellular segment spans residues 1 to 47 (MEPVPSARAELQFSLLANVSDTFPSAFPSASANASGSPGARSASSLA). N-linked (GlcNAc...) asparagine glycosylation is found at N18 and N33. The helical transmembrane segment at 48–75 (LAIAITALYSAVCAVGLLGNVLVMFGIV) threads the bilayer. The Cytoplasmic segment spans residues 76–85 (RYTKLKTATN). A helical transmembrane segment spans residues 86–110 (IYIFNLALADALATSTLPFQSAKYL). Topologically, residues 111–122 (METWPFGELLCK) are extracellular. A disulfide bond links C121 and C198. Residues 123–144 (AVLSIDYYNMFTSIFTLTMMSV) traverse the membrane as a helical segment. Topologically, residues 145–163 (DRYIAVCHPVKALDFRTPA) are cytoplasmic. Residues 164–186 (KAKLINICIWVLASGVGVPIMVM) traverse the membrane as a helical segment. Topologically, residues 187 to 206 (AVTQPRDGAVVCTLQFPSPS) are extracellular. Residues 207 to 238 (WYWDTVTKICVFLFAFVVPILIITVCYGLMLL) traverse the membrane as a helical segment. Residues 239 to 261 (RLRSVRLLSGSKEKDRSLRRITR) lie on the Cytoplasmic side of the membrane. A helical transmembrane segment spans residues 262 to 284 (MVLVVVGAFVVCWAPIHIFVIVW). At 285 to 299 (TLVDINRRDPLVVAA) the chain is on the extracellular side. Residues 300-321 (LHLCIALGYANSSLNPVLYAFL) traverse the membrane as a helical segment. Residues 322–372 (DENFKRCFRQLCRAPCGGQEPGSLRRPRQATARERVTACTPSDGPGGGAAA) are Cytoplasmic-facing. C333 carries S-palmitoyl cysteine lipidation. Residues 340-372 (QEPGSLRRPRQATARERVTACTPSDGPGGGAAA) are disordered.

It belongs to the G-protein coupled receptor 1 family. In terms of assembly, may form homooligomers. Forms a heterodimer with OPRM1. Interacts with GPRASP1. Interacts with RTP4; the interaction promotes cell surface localization of the OPRD1-OPRM1 heterodimer. Ubiquitinated. A basal ubiquitination seems not to be related to degradation. Ubiquitination is increased upon formation of OPRM1:OPRD1 oligomers leading to proteasomal degradation; the ubiquitination is diminished by RTP4. Detected in brain, brain stem and brain cortex.

Its subcellular location is the cell membrane. Its function is as follows. G-protein coupled receptor that functions as a receptor for endogenous enkephalins and for a subset of other opioids. Ligand binding causes a conformation change that triggers signaling via guanine nucleotide-binding proteins (G proteins) and modulates the activity of down-stream effectors, such as adenylate cyclase. Signaling leads to the inhibition of adenylate cyclase activity. Inhibits neurotransmitter release by reducing calcium ion currents and increasing potassium ion conductance. Plays a role in the perception of pain and in opiate-mediated analgesia. Plays a role in developing analgesic tolerance to morphine. The protein is Delta-type opioid receptor (Oprd1) of Rattus norvegicus (Rat).